The following is a 658-amino-acid chain: UvrABC system protein B (658 aa).

In terms of domain architecture, Helicase ATP-binding spans 26-414; that stretch reads DGLRRGVKHQ…PGVVEQIIRP (389 aa). An ATP-binding site is contributed by 39-46; it reads GATGTGKT. Residues 92–115 carry the Beta-hairpin motif; it reads YYDYYQPEAYVPQTDTYIEKDAKI. Residues 430–596 enclose the Helicase C-terminal domain; the sequence is QIDDLIGEIR…TVKKEIRDVI (167 aa). The 36-residue stretch at 622 to 657 folds into the UVR domain; the sequence is EELIRTLEAEMKEAAKALDFERAAQLRDIIFELKAE.

This sequence belongs to the UvrB family. In terms of assembly, forms a heterotetramer with UvrA during the search for lesions. Interacts with UvrC in an incision complex.

The protein localises to the cytoplasm. In terms of biological role, the UvrABC repair system catalyzes the recognition and processing of DNA lesions. A damage recognition complex composed of 2 UvrA and 2 UvrB subunits scans DNA for abnormalities. Upon binding of the UvrA(2)B(2) complex to a putative damaged site, the DNA wraps around one UvrB monomer. DNA wrap is dependent on ATP binding by UvrB and probably causes local melting of the DNA helix, facilitating insertion of UvrB beta-hairpin between the DNA strands. Then UvrB probes one DNA strand for the presence of a lesion. If a lesion is found the UvrA subunits dissociate and the UvrB-DNA preincision complex is formed. This complex is subsequently bound by UvrC and the second UvrB is released. If no lesion is found, the DNA wraps around the other UvrB subunit that will check the other stand for damage. This is UvrABC system protein B from Geobacillus kaustophilus (strain HTA426).